The sequence spans 233 residues: Small ribosomal subunit protein uS3 (233 aa).

Residues 39–107 (VRQFLMKTLE…PVQINISEVR (69 aa)) form the KH type-2 domain.

Belongs to the universal ribosomal protein uS3 family. As to quaternary structure, part of the 30S ribosomal subunit. Forms a tight complex with proteins S10 and S14.

In terms of biological role, binds the lower part of the 30S subunit head. Binds mRNA in the 70S ribosome, positioning it for translation. The polypeptide is Small ribosomal subunit protein uS3 (Buchnera aphidicola subsp. Acyrthosiphon pisum (strain APS) (Acyrthosiphon pisum symbiotic bacterium)).